The following is a 327-amino-acid chain: Aspartate carbamoyltransferase catalytic subunit (327 aa).

The carbamoyl phosphate site is built by R67 and T68. L-aspartate is bound at residue K95. The carbamoyl phosphate site is built by R117, H145, and Q148. L-aspartate contacts are provided by R178 and R232. G273 and P274 together coordinate carbamoyl phosphate.

This sequence belongs to the aspartate/ornithine carbamoyltransferase superfamily. ATCase family. Heterododecamer (2C3:3R2) of six catalytic PyrB chains organized as two trimers (C3), and six regulatory PyrI chains organized as three dimers (R2).

It catalyses the reaction carbamoyl phosphate + L-aspartate = N-carbamoyl-L-aspartate + phosphate + H(+). The protein operates within pyrimidine metabolism; UMP biosynthesis via de novo pathway; (S)-dihydroorotate from bicarbonate: step 2/3. Its function is as follows. Catalyzes the condensation of carbamoyl phosphate and aspartate to form carbamoyl aspartate and inorganic phosphate, the committed step in the de novo pyrimidine nucleotide biosynthesis pathway. The protein is Aspartate carbamoyltransferase catalytic subunit of Parvibaculum lavamentivorans (strain DS-1 / DSM 13023 / NCIMB 13966).